The primary structure comprises 333 residues: Transcription initiation factor IIB (333 aa).

The segment at 33–64 adopts a TFIIB-type zinc-finger fold; that stretch reads EVYRCPICGNDKFIYNYERGEVVCIVCGAVVQ. Cysteine 37, cysteine 40, cysteine 56, and cysteine 59 together coordinate Zn(2+). Repeat copies occupy residues 149–232 and 243–324.

The protein belongs to the TFIIB family.

In terms of biological role, stabilizes TBP binding to an archaeal box-A promoter. Also responsible for recruiting RNA polymerase II to the pre-initiation complex (DNA-TBP-TFIIB). This chain is Transcription initiation factor IIB, found in Pyrobaculum neutrophilum (strain DSM 2338 / JCM 9278 / NBRC 100436 / V24Sta) (Thermoproteus neutrophilus).